The chain runs to 237 residues: MAKSRFEYVRQFEVHDALLPDTYIVVRVDGKKFHEFSKYYNFAKPNDERALKLMNAAAKNVFMQYKQEMICAYGESDEYSFILKRDTKLFNRRRDKISTLFVSLFTANYVSLWNLFFPDVVLHHKHLPYFDSRCVCYPNLTVVKDYLSWRFVDTHINNLYNTVFWYLIIKCGLTPQESEQKLCGTLSSDKQEILFSECGINYNNEPEMYKKGSLVNSKGEIVHIDVVKQIDEIFNGF.

Aspartate 29, glycine 30, and aspartate 77 together coordinate Mg(2+). GTP is bound by residues aspartate 29–histidine 34 and serine 76–aspartate 77.

It belongs to the tRNA(His) guanylyltransferase family. It depends on Mg(2+) as a cofactor.

It carries out the reaction a 5'-end ribonucleotide-tRNA(His) + GTP + ATP + H2O = a 5'-end phospho-guanosine-ribonucleotide-tRNA(His) + AMP + 2 diphosphate + H(+). In terms of biological role, adds a GMP to the 5'-end of tRNA(His) after transcription and RNase P cleavage. This Kluyveromyces lactis (strain ATCC 8585 / CBS 2359 / DSM 70799 / NBRC 1267 / NRRL Y-1140 / WM37) (Yeast) protein is tRNA(His) guanylyltransferase (THG1).